A 380-amino-acid chain; its full sequence is Cytochrome b (380 aa).

4 helical membrane passes run 34–54 (FGSL…LLAA), 78–99 (WLIR…YMHV), 114–134 (WNTG…GYVL), and 179–199 (FFTL…IHLT). Heme b-binding residues include His-84 and His-98. Residues His-183 and His-197 each coordinate heme b. His-202 lines the a ubiquinone pocket. Transmembrane regions (helical) follow at residues 227 to 247 (LKDI…ALFS), 289 to 309 (LGGV…PLLH), 321 to 341 (LSQL…WVGS), and 348 to 368 (FMII…ILFP).

This sequence belongs to the cytochrome b family. The cytochrome bc1 complex contains 11 subunits: 3 respiratory subunits (MT-CYB, CYC1 and UQCRFS1), 2 core proteins (UQCRC1 and UQCRC2) and 6 low-molecular weight proteins (UQCRH/QCR6, UQCRB/QCR7, UQCRQ/QCR8, UQCR10/QCR9, UQCR11/QCR10 and a cleavage product of UQCRFS1). This cytochrome bc1 complex then forms a dimer. Requires heme b as cofactor.

It is found in the mitochondrion inner membrane. In terms of biological role, component of the ubiquinol-cytochrome c reductase complex (complex III or cytochrome b-c1 complex) that is part of the mitochondrial respiratory chain. The b-c1 complex mediates electron transfer from ubiquinol to cytochrome c. Contributes to the generation of a proton gradient across the mitochondrial membrane that is then used for ATP synthesis. The polypeptide is Cytochrome b (MT-CYB) (Balearica pavonina (Black crowned-crane)).